The following is a 584-amino-acid chain: Dihydroxyacetone kinase 1 (584 aa).

Ser2 bears the N-acetylserine mark. A phosphoserine mark is found at Ser2 and Ser5. Positions Glu7–Trp353 constitute a DhaK domain. Substrate-binding positions include Gly51–His54, Lys103, and Asp108. The active-site Tele-hemiaminal-histidine intermediate is the His220. Ser365 bears the Phosphoserine mark. The region spanning Asp386–Ser582 is the DhaL domain. Residues Asp415–Cys418 and Thr459–Ser460 contribute to the ATP site. Ser512 bears the Phosphoserine mark. ATP is bound by residues Thr514 to Met515 and Asp567 to Gly569.

The protein belongs to the dihydroxyacetone kinase (DAK) family.

It catalyses the reaction dihydroxyacetone + ATP = dihydroxyacetone phosphate + ADP + H(+). The enzyme catalyses D-glyceraldehyde + ATP = D-glyceraldehyde 3-phosphate + ADP + H(+). Its pathway is polyol metabolism; glycerol fermentation; glycerone phosphate from glycerol (oxidative route): step 2/2. Its function is as follows. Catalyzes both the phosphorylation of dihydroxyacetone and of glyceraldehyde. The protein is Dihydroxyacetone kinase 1 (DAK1) of Saccharomyces cerevisiae (strain ATCC 204508 / S288c) (Baker's yeast).